The primary structure comprises 160 residues: Cyclic pyranopterin monophosphate synthase (160 aa).

Substrate-binding positions include 75 to 77 (LCH) and 113 to 114 (ME). The active site involves Asp-128.

This sequence belongs to the MoaC family. Homohexamer; trimer of dimers.

It carries out the reaction (8S)-3',8-cyclo-7,8-dihydroguanosine 5'-triphosphate = cyclic pyranopterin phosphate + diphosphate. Its pathway is cofactor biosynthesis; molybdopterin biosynthesis. Catalyzes the conversion of (8S)-3',8-cyclo-7,8-dihydroguanosine 5'-triphosphate to cyclic pyranopterin monophosphate (cPMP). The polypeptide is Cyclic pyranopterin monophosphate synthase (Ruthia magnifica subsp. Calyptogena magnifica).